Here is a 473-residue protein sequence, read N- to C-terminus: tRNA modification GTPase MnmE (473 aa).

(6S)-5-formyl-5,6,7,8-tetrahydrofolate contacts are provided by arginine 31, glutamate 95, and arginine 134. The TrmE-type G domain occupies 230 to 394 (GVSTVIAGKP…LKQHMGDLVK (165 aa)). Residues 240 to 245 (NAGKST), 259 to 265 (SHMPGTT), and 284 to 287 (DTAG) contribute to the GTP site. Mg(2+)-binding residues include serine 244 and threonine 265. Residue lysine 473 participates in (6S)-5-formyl-5,6,7,8-tetrahydrofolate binding.

This sequence belongs to the TRAFAC class TrmE-Era-EngA-EngB-Septin-like GTPase superfamily. TrmE GTPase family. Homodimer. Heterotetramer of two MnmE and two MnmG subunits. K(+) is required as a cofactor.

It localises to the cytoplasm. Exhibits a very high intrinsic GTPase hydrolysis rate. Involved in the addition of a carboxymethylaminomethyl (cmnm) group at the wobble position (U34) of certain tRNAs, forming tRNA-cmnm(5)s(2)U34. This chain is tRNA modification GTPase MnmE, found in Chlorobaculum tepidum (strain ATCC 49652 / DSM 12025 / NBRC 103806 / TLS) (Chlorobium tepidum).